The primary structure comprises 145 residues: Brain and acute leukemia cytoplasmic protein (145 aa).

The N-myristoyl glycine moiety is linked to residue glycine 2. Cysteine 3 carries S-palmitoyl cysteine lipidation. The interaction with CAMK2A stretch occupies residues cysteine 3 to alanine 35. Residues leucine 36–aspartate 113 are disordered. Residues cysteine 83–tryptophan 106 are compositionally biased toward polar residues.

Interacts with CAMK2A. Post-translationally, palmitoylation and myristoylation target the protein to the lipid rafts. As to expression, predominantly expressed in the brain (at protein level). Within the brain, found in most of forebrain structures, including the cerebral cortex, hippocampal formation, olfactory bulb, anterior olfactory nuclei, piriform cortex, tenia tecta and amygdaloid nuclei. Not detected in glial cells.

The protein localises to the cytoplasm. Its subcellular location is the synapse. It is found in the synaptosome. It localises to the membrane raft. The protein resides in the postsynaptic density. Its function is as follows. May play a synaptic role at the postsynaptic lipid rafts possibly through interaction with CAMK2A. The chain is Brain and acute leukemia cytoplasmic protein (Baalc) from Rattus norvegicus (Rat).